A 353-amino-acid chain; its full sequence is Photosystem II protein D1 (353 aa).

N-acetylthreonine is present on Thr2. A Phosphothreonine modification is found at Thr2. 3 helical membrane-spanning segments follow: residues 29–46, 118–133, and 142–156; these read YIGWFGVLMIPTLLTATS, HFLLGVACYMGREWEL, and WIAVAYSAPVAAATA. Residue His118 coordinates chlorophyll a. Residue Tyr126 coordinates pheophytin a. Residues Asp170 and Glu189 each contribute to the [CaMn4O5] cluster site. Residues 197 to 218 traverse the membrane as a helical segment; the sequence is FHMLGVAGVFGGSLFSAMHGSL. His198 contacts chlorophyll a. His215 is an a quinone binding site. Residues His215 and His272 each contribute to the Fe cation site. A helical transmembrane segment spans residues 274–288; that stretch reads FLAAWPVVGIWFTAL. The [CaMn4O5] cluster site is built by His332, Glu333, Asp342, and Ala344. Residues 345–353 constitute a propeptide that is removed on maturation; the sequence is AVEAPSING.

Belongs to the reaction center PufL/M/PsbA/D family. PSII is composed of 1 copy each of membrane proteins PsbA, PsbB, PsbC, PsbD, PsbE, PsbF, PsbH, PsbI, PsbJ, PsbK, PsbL, PsbM, PsbT, PsbX, PsbY, PsbZ, Psb30/Ycf12, at least 3 peripheral proteins of the oxygen-evolving complex and a large number of cofactors. It forms dimeric complexes. The D1/D2 heterodimer binds P680, chlorophylls that are the primary electron donor of PSII, and subsequent electron acceptors. It shares a non-heme iron and each subunit binds pheophytin, quinone, additional chlorophylls, carotenoids and lipids. D1 provides most of the ligands for the Mn4-Ca-O5 cluster of the oxygen-evolving complex (OEC). There is also a Cl(-1) ion associated with D1 and D2, which is required for oxygen evolution. The PSII complex binds additional chlorophylls, carotenoids and specific lipids. serves as cofactor. Post-translationally, tyr-161 forms a radical intermediate that is referred to as redox-active TyrZ, YZ or Y-Z. C-terminally processed by CTPA; processing is essential to allow assembly of the oxygen-evolving complex and thus photosynthetic growth.

The protein resides in the plastid. The protein localises to the chloroplast thylakoid membrane. It catalyses the reaction 2 a plastoquinone + 4 hnu + 2 H2O = 2 a plastoquinol + O2. Functionally, photosystem II (PSII) is a light-driven water:plastoquinone oxidoreductase that uses light energy to abstract electrons from H(2)O, generating O(2) and a proton gradient subsequently used for ATP formation. It consists of a core antenna complex that captures photons, and an electron transfer chain that converts photonic excitation into a charge separation. The D1/D2 (PsbA/PsbD) reaction center heterodimer binds P680, the primary electron donor of PSII as well as several subsequent electron acceptors. This Brassica napus (Rape) protein is Photosystem II protein D1.